Here is a 61-residue protein sequence, read N- to C-terminus: uncharacterized protein (61 aa).

The signal sequence occupies residues 1 to 30 (MDVEVANMAAKLRVRGLKLPNAIVVSTAIL).

This is an uncharacterized protein from Archaeoglobus fulgidus (strain ATCC 49558 / DSM 4304 / JCM 9628 / NBRC 100126 / VC-16).